Here is an 837-residue protein sequence, read N- to C-terminus: MSEEEVHDTSSEASEVFTNQPNAFVRGVRSIFGYRKTSLTLFVILTIVVTAGLSFYDNSLELTIELPTSQLEKEILESSWLDLQNIARYPHTYGSRANDQVHDYLEEIIQDMEYDNDGEKIMFESGKGVVSYYESNNLLVRVNGSDGTLPALLLSAHYDSVPSSFGVTDDGMGVASLLGVLRFVAHNQPRRTIIFNFNNNEEFGLFGAHAFVKHPWFKQVGYFLNLEGTGAGGKAVLFRGTDYGIVKNFGGVRYPYATSIFQQGFNNHVIHSETDYKVYKEAGLRGLDLAFYKPRDKYHTGEDNIRNVSPKSLWHMMSNAIDFVQMGVVDDSEEPAVYTTFLGYFFATPISALARVNLVLLVLFPVVSTPLLFVIVKYKKWKLRVTNFLGVPLAMGLAVAVGQVGNPMLVSSHPMMVVATTTSIVVLVYYVVLNGVDWVNTSSDQKLVTMIEVSFVYWVVLVYVTWSGGDHTGEFGVTVLFFVQASTSLLGLIGWTFTRVRGGDEPLLSGEEERYGTEDERDTEKPLVEHNYDWSLQYLLIVPVSSLVVYNSGWLVLEGVNKTVQESLASEHLIYWIVVVFSQFLVLPVVPFITKFNRYIVLGLSVVAVVGVLMSMAVHPFNQGSPMKLRFIERVGQNDMVEVYGRQGFVEDVLSDLPSVKQTQAKLECEALPDGLEVCKYKSGLTPGNLTVEVTTEPRAESYGLISGAITIAAPENRMCTVHFPPDRVKAVVVGKFGNNFKAIPDGFSREKGNYIYKDRNGISQLELYKLDWNKDYHVGFEWLPDIDDEGGMRVEVECFWGDMVPAYQEVVHYSPNWVTWANKERGLVGVVKHVDV.

Residues 1-36 (MSEEEVHDTSSEASEVFTNQPNAFVRGVRSIFGYRK) lie on the Cytoplasmic side of the membrane. Residues 37–57 (TSLTLFVILTIVVTAGLSFYD) form a helical membrane-spanning segment. The Vacuolar portion of the chain corresponds to 58–355 (NSLELTIELP…FATPISALAR (298 aa)). N-linked (GlcNAc...) asparagine glycosylation occurs at N143. Zn(2+)-binding residues include H157 and D169. Catalysis depends on E201, which acts as the Proton acceptor. Zn(2+) contacts are provided by E202, E227, and H299. A helical transmembrane segment spans residues 356–376 (VNLVLLVLFPVVSTPLLFVIV). At 377–384 (KYKKWKLR) the chain is on the cytoplasmic side. Residues 385-405 (VTNFLGVPLAMGLAVAVGQVG) form a helical membrane-spanning segment. The Vacuolar segment spans residues 406–415 (NPMLVSSHPM). A helical membrane pass occupies residues 416–436 (MVVATTTSIVVLVYYVVLNGV). Over 437 to 446 (DWVNTSSDQK) the chain is Cytoplasmic. The chain crosses the membrane as a helical span at residues 447–467 (LVTMIEVSFVYWVVLVYVTWS). The Vacuolar segment spans residues 468–474 (GGDHTGE). The chain crosses the membrane as a helical span at residues 475–495 (FGVTVLFFVQASTSLLGLIGW). Topologically, residues 496–539 (TFTRVRGGDEPLLSGEEERYGTEDERDTEKPLVEHNYDWSLQYL) are cytoplasmic. A helical transmembrane segment spans residues 540–560 (LIVPVSSLVVYNSGWLVLEGV). N561 is a glycosylation site (N-linked (GlcNAc...) asparagine). Over 561–572 (NKTVQESLASEH) the chain is Vacuolar. A helical membrane pass occupies residues 573–593 (LIYWIVVVFSQFLVLPVVPFI). Residues 594-598 (TKFNR) lie on the Cytoplasmic side of the membrane. The helical transmembrane segment at 599–619 (YIVLGLSVVAVVGVLMSMAVH) threads the bilayer. Over 620–837 (PFNQGSPMKL…LVGVVKHVDV (218 aa)) the chain is Vacuolar. The N-linked (GlcNAc...) asparagine glycan is linked to N689.

It belongs to the peptidase M28 family. The cofactor is Zn(2+).

It is found in the vacuole membrane. In terms of biological role, may be involved in vacuolar sorting and osmoregulation. This Candida albicans (strain WO-1) (Yeast) protein is Vacuolar membrane protease.